Consider the following 625-residue polypeptide: 1-deoxy-D-xylulose-5-phosphate synthase 1 (625 aa).

Thiamine diphosphate contacts are provided by residues H74 and 115–117 (GHT). Position 146 (D146) interacts with Mg(2+). Thiamine diphosphate contacts are provided by residues 147 to 148 (GS), N175, Y286, and E368. N175 contacts Mg(2+).

Belongs to the transketolase family. DXPS subfamily. As to quaternary structure, homodimer. It depends on Mg(2+) as a cofactor. Thiamine diphosphate serves as cofactor.

It carries out the reaction D-glyceraldehyde 3-phosphate + pyruvate + H(+) = 1-deoxy-D-xylulose 5-phosphate + CO2. The protein operates within metabolic intermediate biosynthesis; 1-deoxy-D-xylulose 5-phosphate biosynthesis; 1-deoxy-D-xylulose 5-phosphate from D-glyceraldehyde 3-phosphate and pyruvate: step 1/1. Its function is as follows. Catalyzes the acyloin condensation reaction between C atoms 2 and 3 of pyruvate and glyceraldehyde 3-phosphate to yield 1-deoxy-D-xylulose-5-phosphate (DXP). This chain is 1-deoxy-D-xylulose-5-phosphate synthase 1, found in Geobacter metallireducens (strain ATCC 53774 / DSM 7210 / GS-15).